A 502-amino-acid chain; its full sequence is Hexokinase-9 (502 aa).

Residues 5 to 24 (AALASAAMAAAAVAVVSTVL) form a helical membrane-spanning segment. Residues 37-488 (RAEAVLLRDL…SGVGAALLAA (452 aa)) form the Hexokinase domain. The interval 92-230 (SGGEKGMFYA…GLDMKVTALV (139 aa)) is hexokinase small subdomain. Residues G106, T107, and N108 each contribute to the ADP site. Positions 196, 197, 231, and 232 each coordinate D-glucose. The interval 231 to 477 (NDTVGTLAAG…PSVMIKHVND (247 aa)) is hexokinase large subdomain. T255 serves as a coordination point for ADP. 3 residues coordinate D-glucose: N258, E286, and E317. G442 serves as a coordination point for ADP.

It belongs to the hexokinase family. Expressed in roots, leaves, flowers, immature seeds, endosperm and seed coat.

The protein localises to the plastid. The protein resides in the chloroplast outer membrane. The catalysed reaction is a D-hexose + ATP = a D-hexose 6-phosphate + ADP + H(+). It carries out the reaction D-fructose + ATP = D-fructose 6-phosphate + ADP + H(+). The enzyme catalyses D-glucose + ATP = D-glucose 6-phosphate + ADP + H(+). Its pathway is carbohydrate metabolism; hexose metabolism. The protein operates within carbohydrate degradation; glycolysis; D-glyceraldehyde 3-phosphate and glycerone phosphate from D-glucose: step 1/4. Fructose and glucose phosphorylating enzyme. The protein is Hexokinase-9 (HXK9) of Oryza sativa subsp. japonica (Rice).